Reading from the N-terminus, the 465-residue chain is Cysteine--tRNA ligase (465 aa).

Cys-30 serves as a coordination point for Zn(2+). The 'HIGH' region signature appears at 32 to 42 (ITVYDYCHVGH). 3 residues coordinate Zn(2+): Cys-214, His-239, and Glu-243. The short motif at 271 to 275 (KMSKS) is the 'KMSKS' region element. Lys-274 contacts ATP.

Belongs to the class-I aminoacyl-tRNA synthetase family. Monomer. Zn(2+) is required as a cofactor.

The protein localises to the cytoplasm. It catalyses the reaction tRNA(Cys) + L-cysteine + ATP = L-cysteinyl-tRNA(Cys) + AMP + diphosphate. The polypeptide is Cysteine--tRNA ligase (Burkholderia ambifaria (strain ATCC BAA-244 / DSM 16087 / CCUG 44356 / LMG 19182 / AMMD) (Burkholderia cepacia (strain AMMD))).